A 302-amino-acid chain; its full sequence is 4-hydroxy-tetrahydrodipicolinate synthase (302 aa).

Position 46 (T46) interacts with pyruvate. Y134 serves as the catalytic Proton donor/acceptor. K162 functions as the Schiff-base intermediate with substrate in the catalytic mechanism. Residue V204 participates in pyruvate binding.

The protein belongs to the DapA family. Homotetramer; dimer of dimers.

The protein localises to the cytoplasm. It carries out the reaction L-aspartate 4-semialdehyde + pyruvate = (2S,4S)-4-hydroxy-2,3,4,5-tetrahydrodipicolinate + H2O + H(+). The protein operates within amino-acid biosynthesis; L-lysine biosynthesis via DAP pathway; (S)-tetrahydrodipicolinate from L-aspartate: step 3/4. Catalyzes the condensation of (S)-aspartate-beta-semialdehyde [(S)-ASA] and pyruvate to 4-hydroxy-tetrahydrodipicolinate (HTPA). This is 4-hydroxy-tetrahydrodipicolinate synthase from Xanthomonas campestris pv. campestris (strain ATCC 33913 / DSM 3586 / NCPPB 528 / LMG 568 / P 25).